Reading from the N-terminus, the 309-residue chain is Manganese ABC transporter substrate-binding lipoprotein PsaA (309 aa).

Positions 1–19 are cleaved as a signal peptide; the sequence is MKKLGTLLVLFLSAIILVA. Cysteine 20 carries N-palmitoyl cysteine lipidation. The S-diacylglycerol cysteine moiety is linked to residue cysteine 20. Mn(2+)-binding residues include histidine 67, histidine 139, glutamate 205, and aspartate 280.

Belongs to the bacterial solute-binding protein 9 family. Lipoprotein receptor antigen (Lrai) subfamily.

It is found in the cell membrane. Part of the ATP-binding cassette (ABC) transport system PsaABC involved in manganese import. Binds manganese with high affinity and specificity and delivers it to the membrane permease for translocation into the cytoplasm. Also acts as an adhesin which is involved on adherence to extracellular matrix. It is an important factor in pathogenesis and infection. This is Manganese ABC transporter substrate-binding lipoprotein PsaA (psaA) from Streptococcus pneumoniae serotype 4 (strain ATCC BAA-334 / TIGR4).